The primary structure comprises 493 residues: Phospholipid transfer protein (493 aa).

Positions 1 to 17 (MVLLWALFLALLAGAHA) are cleaved as a signal peptide. N-linked (GlcNAc...) asparagine glycosylation is found at asparagine 64, asparagine 91, asparagine 94, asparagine 117, and asparagine 143. Residues cysteine 146 and cysteine 185 are joined by a disulfide bond. N-linked (GlcNAc...) asparagine glycosylation is found at asparagine 245 and asparagine 398.

It belongs to the BPI/LBP/Plunc superfamily. BPI/LBP family. Glycosylation is necessary for secretion and its phospholipid transfer activity. As to expression, highest level expression in the lung, brain and heart with relatively low levels in the liver, skeletal muscle and testis and very low levels found in the spleen and kidney.

It localises to the secreted. It is found in the nucleus. It carries out the reaction a 1,2-diacyl-sn-glycero-3-phosphocholine(in) = a 1,2-diacyl-sn-glycero-3-phosphocholine(out). The enzyme catalyses a 1,2-diacyl-sn-glycero-3-phosphoethanolamine(in) = a 1,2-diacyl-sn-glycero-3-phosphoethanolamine(out). It catalyses the reaction a 1,2-diacyl-sn-glycerol(in) = a 1,2-diacyl-sn-glycerol(out). The catalysed reaction is a 1,2-diacyl-sn-glycero-3-phosphate(in) = a 1,2-diacyl-sn-glycero-3-phosphate(out). It carries out the reaction a sphingomyelin(in) = a sphingomyelin(out). The enzyme catalyses a 1,2-diacyl-sn-glycero-3-phospho-(1'-sn-glycerol)(in) = a 1,2-diacyl-sn-glycero-3-phospho-(1'-sn-glycerol)(out). It catalyses the reaction a 1,2-diacyl-sn-glycero-3-phospho-(1D-myo-inositol)(in) = a 1,2-diacyl-sn-glycero-3-phospho-(1D-myo-inositol)(out). The catalysed reaction is 1-hexadecanoyl-2-(5Z,8Z,11Z,14Z-eicosatetraenoyl)-sn-glycero-3-phosphoethanolamine(in) = 1-hexadecanoyl-2-(5Z,8Z,11Z,14Z-eicosatetraenoyl)-sn-glycero-3-phosphoethanolamine(out). It carries out the reaction N-(hexadecanoyl)-sphing-4-enine-1-phosphocholine(in) = N-(hexadecanoyl)-sphing-4-enine-1-phosphocholine(out). The enzyme catalyses 1,2-dihexadecanoyl-sn-glycero-3-phosphocholine(in) = 1,2-dihexadecanoyl-sn-glycero-3-phosphocholine(out). In terms of biological role, mediates the transfer of phospholipids and free cholesterol from triglyceride-rich lipoproteins (low density lipoproteins or LDL and very low density lipoproteins or VLDL) into high-density lipoproteins (HDL) as well as the exchange of phospholipids between triglyceride-rich lipoproteins themselves. Facilitates the transfer of a spectrum of different lipid molecules, including sphingomyelin, phosphatidylcholine, phosphatidylinositol, phosphatidylglycerol, and phosphatidyl ethanolamine. Plays an important role in HDL remodeling which involves modulating the size and composition of HDL. Also plays a key role in the uptake of cholesterol from peripheral cells and tissues that is subsequently transported to the liver for degradation and excretion. Two distinct forms of PLTP exist in plasma: an active form that can transfer phosphatidylcholine from phospholipid vesicles to HDL, and an inactive form that lacks this capability. This Mus musculus (Mouse) protein is Phospholipid transfer protein (Pltp).